We begin with the raw amino-acid sequence, 132 residues long: Sec-independent protein translocase protein TatB (132 aa).

The helical transmembrane segment at 2–22 threads the bilayer; it reads FDGIGFMELLLIGILGLVVLG. Residues 68 to 132 form a disordered region; it reads ENQGLKDLSP…VSANPDKSNR (65 aa). Over residues 102–122 the composition is skewed to low complexity; the sequence is TPSASSSAPSESTPSEAPTAE.

Belongs to the TatB family. As to quaternary structure, the Tat system comprises two distinct complexes: a TatABC complex, containing multiple copies of TatA, TatB and TatC subunits, and a separate TatA complex, containing only TatA subunits. Substrates initially bind to the TatABC complex, which probably triggers association of the separate TatA complex to form the active translocon.

It is found in the cell inner membrane. Part of the twin-arginine translocation (Tat) system that transports large folded proteins containing a characteristic twin-arginine motif in their signal peptide across membranes. Together with TatC, TatB is part of a receptor directly interacting with Tat signal peptides. TatB may form an oligomeric binding site that transiently accommodates folded Tat precursor proteins before their translocation. This is Sec-independent protein translocase protein TatB from Shewanella woodyi (strain ATCC 51908 / MS32).